The sequence spans 96 residues: U-stichotoxin-Hau2b (96 aa).

The N-terminal stretch at 1-18 (MKPIFIVALLFSTCLVNA) is a signal peptide. 2 propeptides span residues 19–29 (KPSIDDAEMKR) and 30–33 (EPKP). 2 disulfides stabilise this stretch: Cys40-Cys51 and Cys43-Cys58. 2 consecutive propeptides follow at residues 62 to 64 (RKR) and 65 to 68 (EPKP). Cystine bridges form between Cys75-Cys86 and Cys78-Cys93.

The protein belongs to the sea anemone BBH family.

It localises to the secreted. Its subcellular location is the nematocyst. Functionally, neurotoxin that paralyzes freshwater crabs at high concentration. This Heteractis aurora (Banded sea anemone) protein is U-stichotoxin-Hau2b.